Reading from the N-terminus, the 193-residue chain is Acyl carrier protein phosphodiesterase (193 aa).

This sequence belongs to the AcpH family.

The catalysed reaction is holo-[ACP] + H2O = apo-[ACP] + (R)-4'-phosphopantetheine + H(+). Converts holo-ACP to apo-ACP by hydrolytic cleavage of the phosphopantetheine prosthetic group from ACP. This chain is Acyl carrier protein phosphodiesterase, found in Salmonella agona (strain SL483).